A 982-amino-acid chain; its full sequence is Serine/threonine-protein kinase ATG1 (982 aa).

In terms of domain architecture, Protein kinase spans 19–324 (FVIGAEIGKG…FENFFAHPVI (306 aa)). ATP-binding positions include 25–33 (IGKGSFAQV) and lysine 48. The active-site Proton acceptor is the aspartate 162. Disordered regions lie at residues 334 to 506 (DDIP…REKA), 813 to 834 (RLPDDHPSHPSNHPQGSESVNG), 898 to 918 (PKRRLSANMDDSGGDGEDGHA), and 947 to 982 (RMISNASKAQQQSQPQSLIRRRSGDVTPRSVPSYSS). Composition is skewed to basic and acidic residues over residues 335-359 (DIPKPEASEQRSSSKDTRAASKSDD) and 372-387 (HPTDNDQIRDQFRRVE). The segment covering 388-398 (PPSSAAESAPS) has biased composition (low complexity). The segment covering 463 to 481 (SNASLNRSNRESSSPTSAA) has biased composition (polar residues).

The protein belongs to the protein kinase superfamily. Ser/Thr protein kinase family. APG1/unc-51/ULK1 subfamily. As to quaternary structure, homodimer. Forms a ternary complex with ATG13 and ATG17. As to expression, uniformly detected in conidia, mycelia and appressoria (at protein level).

It localises to the cytoplasm. The protein localises to the preautophagosomal structure membrane. It carries out the reaction L-seryl-[protein] + ATP = O-phospho-L-seryl-[protein] + ADP + H(+). The enzyme catalyses L-threonyl-[protein] + ATP = O-phospho-L-threonyl-[protein] + ADP + H(+). Its function is as follows. Serine/threonine protein kinase involved in the cytoplasm to vacuole transport (Cvt) and found to be essential in autophagy, where it is required for the formation of autophagosomes. Involved in the clearance of protein aggregates which cannot be efficiently cleared by the proteasome. Required for selective autophagic degradation of the nucleus (nucleophagy) as well as for mitophagy which contributes to regulate mitochondrial quantity and quality by eliminating the mitochondria to a basal level to fulfill cellular energy requirements and preventing excess ROS production. Also involved in endoplasmic reticulum-specific autophagic process, in selective removal of ER-associated degradation (ERAD) substrates. Plays a key role in ATG9 and ATG23 cycling through the pre-autophagosomal structure and is necessary to promote ATG18 binding to ATG9 through phosphorylation of ATG9. Catalyzes phosphorylation of ATG4, decreasing the interaction between ATG4 and ATG8 and impairing deconjugation of PE-conjugated forms of ATG8. Autophagy is essential to fungal development, production of appressorium turgor, and pathogenicity in rice blast disease. This chain is Serine/threonine-protein kinase ATG1, found in Pyricularia oryzae (strain 70-15 / ATCC MYA-4617 / FGSC 8958) (Rice blast fungus).